Here is a 964-residue protein sequence, read N- to C-terminus: Translation initiation factor IF-2 (964 aa).

The tract at residues Gln-49–Leu-357 is disordered. The segment covering Ala-62 to Pro-85 has biased composition (low complexity). The span at Ala-86–Arg-102 shows a compositional bias: pro residues. Over residues Pro-103–Ala-117 the composition is skewed to low complexity. The segment covering Pro-159 to Gly-169 has biased composition (pro residues). Composition is skewed to low complexity over residues Gly-190 to Pro-212 and Gly-242 to Gly-251. 2 stretches are compositionally biased toward gly residues: residues Gly-252 to Gly-261 and Gly-284 to Gly-334. A compositionally biased stretch (basic residues) spans Gly-335–Arg-346. The 172-residue stretch at Ala-458–Leu-629 folds into the tr-type G domain. A G1 region spans residues Gly-467–Thr-474. GTP is bound at residue Gly-467–Thr-474. Positions Gly-492–Ala-496 are G2. A G3 region spans residues Asp-517 to Gly-520. Residues Asp-517–His-521 and Asn-571–Asp-574 each bind GTP. The segment at Asn-571–Asp-574 is G4. Residues Ser-607–Arg-609 form a G5 region.

This sequence belongs to the TRAFAC class translation factor GTPase superfamily. Classic translation factor GTPase family. IF-2 subfamily.

Its subcellular location is the cytoplasm. One of the essential components for the initiation of protein synthesis. Protects formylmethionyl-tRNA from spontaneous hydrolysis and promotes its binding to the 30S ribosomal subunits. Also involved in the hydrolysis of GTP during the formation of the 70S ribosomal complex. The sequence is that of Translation initiation factor IF-2 from Cutibacterium acnes (strain DSM 16379 / KPA171202) (Propionibacterium acnes).